A 531-amino-acid chain; its full sequence is Galactose/methyl galactoside import permease protein MglC (531 aa).

10 helical membrane-spanning segments follow: residues 193–213 (FFLANGLYIAIAVFFIACIVV), 239–259 (MFYAVGVAGIILLAGTDLSIG), 267–287 (VVTGIILHPGQNIVTFFGLGP), 300–320 (VMSLAVSVALCVSFSLFAGFF), 326–346 (IHPFISTLATQLIIYGVLFFG), 376–396 (LVTFPKLIIPATIAVAIAWFI), 424–444 (FGVTMSVFAMAAVFYGFGAFF), 461–481 (LDAIASCVVGGISFNGGIGKL), 483–503 (GAVVGVIIFTGLTYCLTFLGI), and 505–525 (TNLQFVFKGLIIIAAVALDSV).

It belongs to the binding-protein-dependent transport system permease family. AraH/RbsC subfamily. The complex is composed of one ATP-binding protein (MglA), two transmembrane proteins (MglC) and a solute-binding protein (MglB).

Its subcellular location is the cell membrane. Functionally, part of the ABC transporter complex MglABC involved in galactose/methyl galactoside import. Probably responsible for the translocation of the substrate across the membrane. The chain is Galactose/methyl galactoside import permease protein MglC (mglC) from Treponema pallidum (strain Nichols).